We begin with the raw amino-acid sequence, 241 residues long: Small ribosomal subunit protein uS2 (241 aa).

It belongs to the universal ribosomal protein uS2 family.

This Cronobacter sakazakii (strain ATCC BAA-894) (Enterobacter sakazakii) protein is Small ribosomal subunit protein uS2.